Here is a 76-residue protein sequence, read N- to C-terminus: MRFYIGLMAALMLTSVLRTDSASVGQTGTKSELAVIERVIRQRDAADVKPVARQNEGPGRDPAPCCQHPIETCCRR.

A signal peptide spans 1-22 (MRFYIGLMAALMLTSVLRTDSA). The propeptide occupies 23–42 (SVGQTGTKSELAVIERVIRQ). A 4-hydroxyproline modification is found at Pro50. 3 positions are modified to 4-hydroxyproline; partial: Pro58, Pro62, and Pro64.

The protein belongs to the conotoxin T superfamily. Contains 2 disulfide bonds that can be either 'C1-C3, C2-C4' or 'C1-C4, C2-C3', since these disulfide connectivities have been observed for conotoxins with cysteine framework V (for examples, see AC P0DQQ7 and AC P81755). Expressed by the venom duct.

The protein localises to the secreted. Probable neurotoxin with unknown target. Possibly targets ion channels. The chain is Conotoxin Cal5a L3 from Californiconus californicus (California cone).